The following is a 255-amino-acid chain: Aliphatic sulfonates import ATP-binding protein SsuB (255 aa).

The ABC transporter domain maps to leucine 12 to leucine 233. Position 44 to 51 (glycine 44 to serine 51) interacts with ATP.

This sequence belongs to the ABC transporter superfamily. Aliphatic sulfonates importer (TC 3.A.1.17.2) family. As to quaternary structure, the complex is composed of two ATP-binding proteins (SsuB), two transmembrane proteins (SsuC) and a solute-binding protein (SsuA).

The protein localises to the cell inner membrane. The catalysed reaction is ATP + H2O + aliphatic sulfonate-[sulfonate-binding protein]Side 1 = ADP + phosphate + aliphatic sulfonateSide 2 + [sulfonate-binding protein]Side 1.. Its function is as follows. Part of the ABC transporter complex SsuABC involved in aliphatic sulfonates import. Responsible for energy coupling to the transport system. The chain is Aliphatic sulfonates import ATP-binding protein SsuB from Escherichia coli O6:H1 (strain CFT073 / ATCC 700928 / UPEC).